A 483-amino-acid polypeptide reads, in one-letter code: Protein adenylyltransferase Fic (483 aa).

A helical transmembrane segment spans residues 20–42 (AFFFIAGSLATFVFHALTSSSSV). TPR repeat units lie at residues 107 to 140 (ALGAMRLALDMHISGKDDKAARLFEHALALAPKH) and 141 to 175 (PEVLLRYGEFLEHNQRNIVLADQYYFQALSISPSN). The Inhibitory (S/T)XXXE(G/N) motif motif lies at 232-237 (SVGIEG). Residues Glu-236 and 317-320 (VGGH) contribute to the ATP site. Residues 286–421 (ITLKDILELH…IRPFVRFIAD (136 aa)) enclose the Fido domain. Residue His-364 is part of the active site. ATP-binding positions include 368-375 (DGNGRTSR), 400-401 (YY), and Asn-408. The disordered stretch occupies residues 464–483 (SAPEPYESGSGLDSGVNGMP).

This sequence belongs to the fic family. Homodimer.

It localises to the membrane. The enzyme catalyses L-tyrosyl-[protein] + ATP = O-(5'-adenylyl)-L-tyrosyl-[protein] + diphosphate. It catalyses the reaction L-threonyl-[protein] + ATP = 3-O-(5'-adenylyl)-L-threonyl-[protein] + diphosphate. The catalysed reaction is 3-O-(5'-adenylyl)-L-threonyl-[protein] + H2O = L-threonyl-[protein] + AMP + H(+). With respect to regulation, the side chain of Glu-236 determines which of the two opposing activities (AMPylase or de-AMPylase) will take place. In response to endoplasmic reticulum stress, mediates de-AMPylase activity. Adenylyltransferase activity is inhibited by the inhibitory helix present at the N-terminus: Glu-236 binds ATP and competes with ATP-binding at Arg-375, thereby preventing adenylyltransferase activity. In unstressed cells, disengagement of Glu-236 promotes adenylyltransferase activity. Activation dissociates ATP-binding from Glu-236, allowing ordered binding of the entire ATP moiety with the alpha-phosphate in an orientation that is productive for accepting an incoming target hydroxyl side chain. Protein that can both mediate the addition of adenosine 5'-monophosphate (AMP) to specific residues of target proteins (AMPylation), and the removal of the same modification from target proteins (de-AMPylation), depending on the context. The side chain of Glu-236 determines which of the two opposing activities (AMPylase or de-AMPylase) will take place. Acts as a key regulator of the unfolded protein response (UPR) by mediating AMPylation or de-AMPylation of Hsc70-3/BiP. In unstressed cells, acts as an adenylyltransferase by mediating AMPylation of Hsc70-3/BiP at 'Thr-518', thereby inactivating it. In response to endoplasmic reticulum stress, acts as a phosphodiesterase by mediating removal of ATP (de-AMPylation) from Hsc70-3/BiP at 'Thr-518', leading to restore HSPA5/BiP activity. The protein is Protein adenylyltransferase Fic of Drosophila grimshawi (Hawaiian fruit fly).